The sequence spans 364 residues: 3-isopropylmalate dehydrogenase (364 aa).

An NAD(+)-binding site is contributed by 78 to 89; it reads GPKWGTGAVRPE. Residues arginine 96, arginine 106, arginine 135, and aspartate 224 each coordinate substrate. Mg(2+)-binding residues include aspartate 224, aspartate 249, and aspartate 253. 288 to 299 is an NAD(+) binding site; the sequence is GSAPDLPANKVN.

It belongs to the isocitrate and isopropylmalate dehydrogenases family. In terms of assembly, homodimer. Requires Mg(2+) as cofactor. Mn(2+) is required as a cofactor.

It localises to the cytoplasm. It carries out the reaction (2R,3S)-3-isopropylmalate + NAD(+) = 4-methyl-2-oxopentanoate + CO2 + NADH. It participates in amino-acid biosynthesis; L-leucine biosynthesis; L-leucine from 3-methyl-2-oxobutanoate: step 3/4. Functionally, catalyzes the oxidation of 3-carboxy-2-hydroxy-4-methylpentanoate (3-isopropylmalate) to 3-carboxy-4-methyl-2-oxopentanoate. The product decarboxylates to 4-methyl-2 oxopentanoate. The protein is 3-isopropylmalate dehydrogenase (LEU2) of Wickerhamomyces anomalus (strain ATCC 8168 / CBS 5759 / DSM 6766 / JCM 3585 / IAM 12210 / NCYC 432 / NBRC 10213 / NRRL Y-366 / AJ 5027) (Yeast).